A 269-amino-acid chain; its full sequence is Tryptophan synthase alpha chain (269 aa).

Catalysis depends on proton acceptor residues glutamate 49 and aspartate 60.

Belongs to the TrpA family. Tetramer of two alpha and two beta chains.

It catalyses the reaction (1S,2R)-1-C-(indol-3-yl)glycerol 3-phosphate + L-serine = D-glyceraldehyde 3-phosphate + L-tryptophan + H2O. The protein operates within amino-acid biosynthesis; L-tryptophan biosynthesis; L-tryptophan from chorismate: step 5/5. The alpha subunit is responsible for the aldol cleavage of indoleglycerol phosphate to indole and glyceraldehyde 3-phosphate. In Buchnera aphidicola subsp. Acyrthosiphon pisum (strain APS) (Acyrthosiphon pisum symbiotic bacterium), this protein is Tryptophan synthase alpha chain.